We begin with the raw amino-acid sequence, 225 residues long: Ferric nitrobindin-like protein (225 aa).

The GXWXGXG signature appears at 78-84; it reads GVWRGTG.

This sequence belongs to the nitrobindin family.

The sequence is that of Ferric nitrobindin-like protein from Corynebacterium diphtheriae (strain ATCC 700971 / NCTC 13129 / Biotype gravis).